A 370-amino-acid chain; its full sequence is Allatostatins (370 aa).

The signal sequence occupies residues 1–27 (MSGPRTCFCLPSALVLVLLSLSTSALG). Residues 28-65 (TAPEPSGVHEESPAGGGTDLLPHPEDLSASDNPDLEFV) constitute a propeptide that is removed on maturation. Residues 29–58 (APEPSGVHEESPAGGGTDLLPHPEDLSASD) form a disordered region. Leucine amide is present on residues leucine 73, leucine 94, leucine 105, and leucine 117. Residues 121–151 (DYDYYGEEDEDDQQAIGDEDIEESDVGDLMD) constitute a propeptide that is removed on maturation. Leucine 161, leucine 172, leucine 188, leucine 200, leucine 213, and leucine 232 each carry leucine amide. The propeptide occupies 236-251 (SDDIDFRELEEKFAED). Position 264 is a leucine amide (leucine 264). A propeptide spanning residues 268-345 (EVEPSELEAV…ITPEEFSRMV (78 aa)) is cleaved from the precursor. A disordered region spans residues 273–298 (ELEAVRNEEKDNSSVHDKKNNTNDMH). At leucine 353 the chain carries Leucine amide. Residue isoleucine 364 is modified to Isoleucine amide. Positions 368 to 370 (SER) are excised as a propeptide.

The protein belongs to the allatostatin family. In terms of tissue distribution, brain, subesophageal ganglion and corpus allatum.

The protein resides in the secreted. Its function is as follows. Neuropeptide inhibitors of juvenile hormone synthesis and gut muscle contraction. This is Allatostatins from Diploptera punctata (Pacific beetle cockroach).